The sequence spans 370 residues: 3-dehydroquinate synthase (370 aa).

Residues Gly-108–Asp-112, Thr-132–Thr-133, Lys-145, and Lys-154 each bind NAD(+). Zn(2+)-binding residues include Glu-187, His-249, and His-267.

The protein belongs to the sugar phosphate cyclases superfamily. Dehydroquinate synthase family. The cofactor is Co(2+). Zn(2+) is required as a cofactor. It depends on NAD(+) as a cofactor.

It localises to the cytoplasm. The catalysed reaction is 7-phospho-2-dehydro-3-deoxy-D-arabino-heptonate = 3-dehydroquinate + phosphate. The protein operates within metabolic intermediate biosynthesis; chorismate biosynthesis; chorismate from D-erythrose 4-phosphate and phosphoenolpyruvate: step 2/7. Functionally, catalyzes the conversion of 3-deoxy-D-arabino-heptulosonate 7-phosphate (DAHP) to dehydroquinate (DHQ). The chain is 3-dehydroquinate synthase from Cereibacter sphaeroides (strain ATCC 17029 / ATH 2.4.9) (Rhodobacter sphaeroides).